Here is a 561-residue protein sequence, read N- to C-terminus: Putative transport protein YbjL (561 aa).

The next 5 helical transmembrane spans lie at 8-28 (LLNG…LCLG), 32-52 (LGSI…LLGQ), 66-86 (FMLF…SIFF), 94-114 (MLAL…GKLF), and 158-178 (NLSL…IVGA). RCK C-terminal domains follow at residues 200–288 (RGLD…SFRN) and 292–373 (VFDR…RIGF). The next 5 helical transmembrane spans lie at 383-403 (LLAF…TFQF), 406-426 (FSFG…LGFM), 451-471 (VFMA…LGAI), 475-495 (MLIA…LFGA), and 540-560 (AIAN…WPGL).

The protein belongs to the AAE transporter (TC 2.A.81) family. YbjL subfamily.

It localises to the cell membrane. The sequence is that of Putative transport protein YbjL from Escherichia coli O127:H6 (strain E2348/69 / EPEC).